We begin with the raw amino-acid sequence, 646 residues long: Centrosomal protein of 72 kDa (646 aa).

LRR repeat units lie at residues 28 to 49 (ELRS…GNSL), 54 to 75 (ALKS…QYLV), and 76 to 97 (SLES…FRLH). In terms of domain architecture, LRRCT spans 110 to 149 (NPVVKNESDYRLFVVHMLPKLRQLDDRPVRESERKASQLH). 2 positions are modified to phosphoserine: S117 and S236. Disordered stretches follow at residues 300–342 (SVDV…RFQV) and 357–399 (GPSS…SDPR). The segment covering 307–319 (ASSAQKSSLSSQK) has biased composition (low complexity). S380 is modified (phosphoserine). Residues 383 to 392 (EALEAEERTS) are compositionally biased toward basic and acidic residues. S402 is modified (phosphoserine). The stretch at 476 to 622 (LSLENKTLQS…RAEVEQMRWS (147 aa)) forms a coiled coil.

This sequence belongs to the CEP72 family. As to quaternary structure, interacts with KIZ, PCM1 and CDK5RAP2.

The protein localises to the cytoplasm. It is found in the cytoskeleton. Its subcellular location is the microtubule organizing center. It localises to the centrosome. The protein resides in the centriolar satellite. Functionally, involved in the recruitment of key centrosomal proteins to the centrosome. Provides centrosomal microtubule-nucleation activity on the gamma-tubulin ring complexes (gamma-TuRCs) and has critical roles in forming a focused bipolar spindle, which is needed for proper tension generation between sister chromatids. Required for localization of KIZ, AKAP9 and gamma-tubulin ring complexes (gamma-TuRCs). Involved in centriole duplication. Required for CDK5RAP22, CEP152, WDR62 and CEP63 centrosomal localization and promotes the centrosomal localization of CDK2. The sequence is that of Centrosomal protein of 72 kDa (Cep72) from Mus musculus (Mouse).